The following is a 451-amino-acid chain: Glyceraldehyde-3-phosphate dehydrogenase B, chloroplastic (451 aa).

Residues 1 to 83 constitute a chloroplast transit peptide; the sequence is MASHAALAPS…AAPVRGETVA (83 aa). Residues 94 to 95, aspartate 118, and arginine 163 each bind NADP(+); that span reads RI. D-glyceraldehyde 3-phosphate is bound by residues 237–239, threonine 268, arginine 283, 296–297, and arginine 319; these read SCT and TG. Residue cysteine 238 is the Nucleophile of the active site. Asparagine 402 lines the NADP(+) pocket.

The protein belongs to the glyceraldehyde-3-phosphate dehydrogenase family. Tetramer of either four A chains (GAPDH 2) or two A and two B chains (GAPDH 1).

It is found in the plastid. The protein resides in the chloroplast. The enzyme catalyses D-glyceraldehyde 3-phosphate + phosphate + NADP(+) = (2R)-3-phospho-glyceroyl phosphate + NADPH + H(+). It participates in carbohydrate biosynthesis; Calvin cycle. In Spinacia oleracea (Spinach), this protein is Glyceraldehyde-3-phosphate dehydrogenase B, chloroplastic (GAPB).